We begin with the raw amino-acid sequence, 562 residues long: Tryptophan 2-monooxygenase (562 aa).

FMN contacts are provided by S54, E74, R76, R82, and R104. R104 is a binding site for substrate.

It belongs to the tryptophan 2-monooxygenase family. FMN serves as cofactor.

The enzyme catalyses L-tryptophan + O2 = indole-3-acetamide + CO2 + H2O. Its pathway is plant hormone metabolism; auxin biosynthesis. The sequence is that of Tryptophan 2-monooxygenase (iaaM) from Pantoea agglomerans pv. gypsophilae (Erwinia herbicola).